The chain runs to 332 residues: L-lactate dehydrogenase A chain (332 aa).

The residue at position 5 (Lys-5) is an N6-acetyllysine; alternate. Position 5 is an N6-succinyllysine; alternate (Lys-5). Lys-14 is subject to N6-acetyllysine. Thr-18 is subject to Phosphothreonine. 29–57 is a binding site for NAD(+); the sequence is GAVGMACAISILMKDLADELALVDVIEDK. Lys-57 is modified (N6-acetyllysine; alternate). Lys-57 is covalently cross-linked (Glycyl lysine isopeptide (Lys-Gly) (interchain with G-Cter in SUMO2); alternate). Lys-81 bears the N6-acetyllysine mark. Arg-99 contributes to the NAD(+) binding site. Arg-106 is a binding site for substrate. Lys-118 is modified (N6-acetyllysine; alternate). Lys-118 carries the post-translational modification N6-succinyllysine; alternate. Position 126 is an N6-acetyllysine (Lys-126). Position 138 (Asn-138) interacts with NAD(+). Substrate contacts are provided by Asn-138 and Arg-169. His-193 functions as the Proton acceptor in the catalytic mechanism. N6-acetyllysine is present on Lys-232. Tyr-239 carries the post-translational modification Phosphotyrosine. N6-acetyllysine is present on Lys-243. Thr-248 is a substrate binding site. Phosphothreonine occurs at positions 309 and 322.

It belongs to the LDH/MDH superfamily. LDH family. In terms of assembly, homotetramer. Interacts with PTEN upstream reading frame protein MP31. In terms of processing, ISGylated.

The protein resides in the cytoplasm. The enzyme catalyses (S)-lactate + NAD(+) = pyruvate + NADH + H(+). The protein operates within fermentation; pyruvate fermentation to lactate; (S)-lactate from pyruvate: step 1/1. Its function is as follows. Interconverts simultaneously and stereospecifically pyruvate and lactate with concomitant interconversion of NADH and NAD(+). The protein is L-lactate dehydrogenase A chain (LDHA) of Monodelphis domestica (Gray short-tailed opossum).